The primary structure comprises 399 residues: Tryptophan synthase beta chain (399 aa).

Lysine 92 is subject to N6-(pyridoxal phosphate)lysine.

This sequence belongs to the TrpB family. As to quaternary structure, tetramer of two alpha and two beta chains. Pyridoxal 5'-phosphate serves as cofactor.

It catalyses the reaction (1S,2R)-1-C-(indol-3-yl)glycerol 3-phosphate + L-serine = D-glyceraldehyde 3-phosphate + L-tryptophan + H2O. It functions in the pathway amino-acid biosynthesis; L-tryptophan biosynthesis; L-tryptophan from chorismate: step 5/5. Functionally, the beta subunit is responsible for the synthesis of L-tryptophan from indole and L-serine. The sequence is that of Tryptophan synthase beta chain from Bordetella petrii (strain ATCC BAA-461 / DSM 12804 / CCUG 43448).